A 673-amino-acid polypeptide reads, in one-letter code: MSKPFKLNSAFKPSGDQPDAIRRLEEGLEDGLAHQTLLGVTGSGKTFTIANVIADLQRPTMVLAPNKTLAAQLYGEMKEFFPENAVEYFVSYYDYYQPEAYVPSSDTFIEKDASINEHIEQMRLSATKALLERRDVVVVASVSAIYGLGDPDLYLKMMLHLTVGMLIDQRAILRRLAELQYTRNDQAFQRGTFRVRGEVIDIFPAESDDIALRVELFDEEVERLSLFDPLTGQVESTVPRYTIYPKTHYVTPRERILQAMEEIKDELADRRKVLLANNKLLEEQRLSQRTQFDLEMMNELGYCSGIENYSRFLSGRGPGEPPPTLFDYLPADGLLVVDESHVTIPQIGGMYRGDRARKETLVEYGFRLPSALDNRPLKFEEFEALAPQTIYVSATPGNYELEKSGDEVVDQVVRPTGLLDPIIEVRPVATQVDDLLSEIRQRAAINERVLVTTLTKRMAEDLTEYLEEHGERVRYLHSDIDTVERMEIIRDLRLGEFDVLVGINLLREGLDMPEVSLVAILDADKEGFLRSERSLIQTIGRAARNVNGKAILYGDKITPSMAKAIGETERRREKQQKYNEEHGITPQGLNKKVVDILALGQNIAKTKAKGKGKGRSTAKAGIVELDMTPKALQQKIHELEGQMMQHAQNLEFEEAAQIRDQLHQLRELFIAAS.

In terms of domain architecture, Helicase ATP-binding spans 26-414 (EGLEDGLAHQ…GDEVVDQVVR (389 aa)). Position 39-46 (39-46 (GVTGSGKT)) interacts with ATP. A Beta-hairpin motif is present at residues 92 to 115 (YYDYYQPEAYVPSSDTFIEKDASI). A Helicase C-terminal domain is found at 431 to 597 (QVDDLLSEIR…GLNKKVVDIL (167 aa)). A UVR domain is found at 633–668 (QQKIHELEGQMMQHAQNLEFEEAAQIRDQLHQLREL).

The protein belongs to the UvrB family. Forms a heterotetramer with UvrA during the search for lesions. Interacts with UvrC in an incision complex.

It localises to the cytoplasm. The UvrABC repair system catalyzes the recognition and processing of DNA lesions. A damage recognition complex composed of 2 UvrA and 2 UvrB subunits scans DNA for abnormalities. Upon binding of the UvrA(2)B(2) complex to a putative damaged site, the DNA wraps around one UvrB monomer. DNA wrap is dependent on ATP binding by UvrB and probably causes local melting of the DNA helix, facilitating insertion of UvrB beta-hairpin between the DNA strands. Then UvrB probes one DNA strand for the presence of a lesion. If a lesion is found the UvrA subunits dissociate and the UvrB-DNA preincision complex is formed. This complex is subsequently bound by UvrC and the second UvrB is released. If no lesion is found, the DNA wraps around the other UvrB subunit that will check the other stand for damage. This is UvrABC system protein B from Salmonella paratyphi A (strain ATCC 9150 / SARB42).